We begin with the raw amino-acid sequence, 311 residues long: Putative S-adenosyl-L-methionine-dependent methyltransferase MRA_0152 (311 aa).

Residues Asp135 and 164–165 each bind S-adenosyl-L-methionine; that span reads DL.

Belongs to the UPF0677 family.

In terms of biological role, exhibits S-adenosyl-L-methionine-dependent methyltransferase activity. The chain is Putative S-adenosyl-L-methionine-dependent methyltransferase MRA_0152 from Mycobacterium tuberculosis (strain ATCC 25177 / H37Ra).